The following is a 294-amino-acid chain: Mimecan (294 aa).

Residues 1–19 form the signal peptide; that stretch reads MKTLQAAFFLVAFVPLVKP. Asn61 carries N-linked (GlcNAc...) asparagine glycosylation. 7 LRR repeats span residues 108–127, 128–151, 152–175, 176–195, 196–221, 222–242, and 243–273; these read EAVP…FNKI, KRIA…GNMI, EEIE…ENRL, VKLP…QNRI, KSRG…HNAL, ESVP…HNNI, and TTIN…GNPI. N-linked (GlcNAc...) asparagine glycans are attached at residues Asn241 and Asn254. An intrachain disulfide couples Cys251 to Cys284.

Belongs to the small leucine-rich proteoglycan (SLRP) family. SLRP class III subfamily. In terms of processing, the composition of the N-linked chains or the substitution of the N-linked sites is different between embryonic and adult tissues. Post-translationally, contains keratan sulfate.

Its subcellular location is the secreted. It is found in the extracellular space. It localises to the extracellular matrix. Functionally, induces bone formation in conjunction with TGF-beta-1 or TGF-beta-2. The chain is Mimecan (OGN) from Gallus gallus (Chicken).